The primary structure comprises 688 residues: Sodium channel and clathrin linker 1 (688 aa).

An N-acetylalanine modification is found at A2. 2 coiled-coil regions span residues 59–108 (LIAE…AVEK) and 152–673 (QTAS…SVIT). At S681 the chain carries Phosphoserine.

As to quaternary structure, interacts with SCN10A and clathrin. Identified in a complex containing SCN10A, clathrin and SCLT1.

It is found in the cytoplasm. The protein localises to the cytoskeleton. Its subcellular location is the microtubule organizing center. It localises to the centrosome. The protein resides in the centriole. Adapter protein that links SCN10A to clathrin. Regulates SCN10A channel activity, possibly by promoting channel internalization. This chain is Sodium channel and clathrin linker 1 (Sclt1), found in Mus musculus (Mouse).